The sequence spans 322 residues: Probable cell division protein WhiA (322 aa).

A DNA-binding region (H-T-H motif) is located at residues 279 to 312 (SLKELGELWTPPVGKSGVNHRIRKIERLAEKLRS).

Belongs to the WhiA family.

Its function is as follows. Involved in cell division and chromosome segregation. The chain is Probable cell division protein WhiA from Desulforamulus reducens (strain ATCC BAA-1160 / DSM 100696 / MI-1) (Desulfotomaculum reducens).